A 464-amino-acid chain; its full sequence is MTVNSKRIPFGKPMLEAFCMDPEYTNLNSSSCGSWPKVVSKQIRDYWSLLEAQPDLFSEFYQGLVLQEARLGLARLVHAAVSECVLVSNVTTGIFTVLYNQEFEERDVVVTLSTTYGAIDHGITSLAETRSFKTRRVEFELPTTGEKIVSQFETTIAQIRAKGLRPRLAILETIVSIPAVRMPFEDLLRVCQKECIMTLVDGAHSVGQFEVNLQELHPDFFVSDCHKWLFVPRPCAFLYVAERNQHMMRSAIPTSFGFIPKNGNSQLPLWSQMVSANGTASSFETLFAYTATSDNMPHLCIPTALRFRRDVCGGEAAIYEYIKWLAKEGGDKVAEILQTEVLEEPGLGAGADGQMRDCGIVTVRLPLAIATGPSTAPAHVPGGALTEKEVGPAVRYLTKALADRYKTWIPIADCRGWIWARLCAQVYLEVSDFEMAGNALKVICEEILSREMGQEISDSYRWHD.

Lysine 227 carries the N6-(pyridoxal phosphate)lysine modification.

It belongs to the class-V pyridoxal-phosphate-dependent aminotransferase family. Requires pyridoxal 5'-phosphate as cofactor.

The protein operates within alkaloid biosynthesis. Its function is as follows. L-cysteine desulfhydrase-like protein; part of the gene cluster that mediates the biosynthesis of loline alkaloids, potent insecticidal agents composed of a pyrrolizidine ring system and an uncommon ether bridge linking carbons 2 and 7. Lolines are structurally differentiated by the various modifications of the L-amino group and include norloline, loline, N-methylloline, N-acetylloline, N-acetylnorloline, and N-formylloline. The first committed step is the condensation of O-acetyl-L-homoserine (derived from L-aspartic acid) and L-proline, probably catalyzed by the gamma-type pyridoxal 5'-phosphate(PLP)-dependent enzyme lolC, to give the diamino diacid, NACPP. Ensuing cyclization, decarboxylation, and acetylation steps yield 1-exo-acetamidopyrrolizidine (AcAP). LolO is required for installation of the ether bridge upon the pathway intermediate, 1-exo-acetamidopyrrolizidine (AcAP). In sequential 2-oxoglutarate- and O(2)-consuming steps, lolO removes hydrogens from C2 and C7 of AcAP to form both carbon-oxygen bonds in N-acetylnorloline (NANL), the precursor to all other lolines. The enzymes lolD, lolE, lolF and lolT have also been proposed to be involved in the ether-bridge installation. Further processing of the exocyclic moiety of NANL by fungal N-acetamidase (LolN), methyltransferase (LolM), and cytochrome P450 (LolP) enzymes, with occasional involvement of a plant acetyltransferase, generates the other known lolines. LolN transforms NANL to norlonine which is monomethylated and dimethylated to respectively lonine and N-methyllonine (NML) by lolM. LolP catalyzes hydroxylation of the methyl group in N-methylloline (NML) and further oxygenation to N-formylloline (NFL). A plant acetyltransferase is responsible for the acetylation of loline to form N-acetylloline (NAL). LolA might interact with aspartate kinase to prevent feedback inhibition of its activity by these end products and thereby promote production of L-homoserine from L-aspartate. The chain is L-cysteine desulfhydrase-like protein lolT2 from Epichloe uncinata (Endophyte fungus).